Consider the following 432-residue polypeptide: Nuclear pore complex-interacting protein family member B9 (432 aa).

Disordered regions lie at residues 260–280 and 353–420; these read RMGRQPPPPTQQHSITDNSLS and SPLP…LRTR. The span at 270 to 280 shows a compositional bias: polar residues; sequence QQHSITDNSLS. Positions 374–402 are enriched in basic and acidic residues; the sequence is EVEKPPKPKRWRVDEVEQSPKPKRQREAE. Residues 408 to 420 show a composition bias toward basic residues; the sequence is KPKRRRLSKLRTR.

It belongs to the NPIP family.

This is Nuclear pore complex-interacting protein family member B9 (NPIPB9) from Homo sapiens (Human).